Consider the following 153-residue polypeptide: Large ribosomal subunit protein bL27m (153 aa).

Residues 1–37 (MINQGLFIRVNNFQLLKASLAYKKASNILTFPPIRTS) constitute a mitochondrion transit peptide. Residues 34 to 57 (IRTSTKHGGGSSKNTGDSAGRRLG) are disordered.

Belongs to the bacterial ribosomal protein bL27 family. In terms of assembly, component of the mitochondrial large ribosomal subunit (mt-LSU). Mature yeast 74S mitochondrial ribosomes consist of a small (37S) and a large (54S) subunit. The 37S small subunit contains a 15S ribosomal RNA (15S mt-rRNA) and at least 32 different proteins. The 54S large subunit contains a 21S rRNA (21S mt-rRNA) and at least 45 different proteins.

The protein localises to the mitochondrion. Its function is as follows. Component of the mitochondrial ribosome (mitoribosome), a dedicated translation machinery responsible for the synthesis of mitochondrial genome-encoded proteins, including at least some of the essential transmembrane subunits of the mitochondrial respiratory chain. The mitoribosomes are attached to the mitochondrial inner membrane and translation products are cotranslationally integrated into the membrane. This chain is Large ribosomal subunit protein bL27m (mrp7), found in Schizosaccharomyces pombe (strain 972 / ATCC 24843) (Fission yeast).